We begin with the raw amino-acid sequence, 209 residues long: Imidazole glycerol phosphate synthase subunit HisH (209 aa).

The Glutamine amidotransferase type-1 domain occupies 5–209; that stretch reads AIAIIDYDMG…LRNFVALVKD (205 aa). C83 serves as the catalytic Nucleophile. Residues H188 and E190 contribute to the active site.

As to quaternary structure, heterodimer of HisH and HisF.

It is found in the cytoplasm. It carries out the reaction 5-[(5-phospho-1-deoxy-D-ribulos-1-ylimino)methylamino]-1-(5-phospho-beta-D-ribosyl)imidazole-4-carboxamide + L-glutamine = D-erythro-1-(imidazol-4-yl)glycerol 3-phosphate + 5-amino-1-(5-phospho-beta-D-ribosyl)imidazole-4-carboxamide + L-glutamate + H(+). The enzyme catalyses L-glutamine + H2O = L-glutamate + NH4(+). The protein operates within amino-acid biosynthesis; L-histidine biosynthesis; L-histidine from 5-phospho-alpha-D-ribose 1-diphosphate: step 5/9. IGPS catalyzes the conversion of PRFAR and glutamine to IGP, AICAR and glutamate. The HisH subunit catalyzes the hydrolysis of glutamine to glutamate and ammonia as part of the synthesis of IGP and AICAR. The resulting ammonia molecule is channeled to the active site of HisF. The chain is Imidazole glycerol phosphate synthase subunit HisH from Thermosynechococcus vestitus (strain NIES-2133 / IAM M-273 / BP-1).